The sequence spans 233 residues: Small ribosomal subunit protein uS7m (233 aa).

The N-terminal 28 residues, 1 to 28 (MAAPTAAGLCPRLRAWLPRLTQVRWSRY), are a transit peptide targeting the mitochondrion.

The protein belongs to the universal ribosomal protein uS7 family. As to quaternary structure, component of the mitochondrial ribosome small subunit (28S) which comprises a 12S rRNA and about 30 distinct proteins.

It is found in the mitochondrion. The protein is Small ribosomal subunit protein uS7m (MRPS7) of Gallus gallus (Chicken).